The following is a 165-amino-acid chain: MSHPALTQLRALRYFKEIPALDTQLLDWLLLEDSMTKRFEQQGKTVSVTMIREGFVEQNEIPEELPLLPKESRYWLREILLCADGEPWLAGRTVVPVSTLSGPELALQKLGKTPLGRYLFTSSTLTRDFIEIGRDAGLWGRRSRLRLSGKPLLLTELFLPASPLY.

Substrate is bound by residues Met35, Arg77, Leu115, and Glu156.

Belongs to the UbiC family. In terms of assembly, monomer.

The protein localises to the cytoplasm. The catalysed reaction is chorismate = 4-hydroxybenzoate + pyruvate. It functions in the pathway cofactor biosynthesis; ubiquinone biosynthesis. Its function is as follows. Removes the pyruvyl group from chorismate, with concomitant aromatization of the ring, to provide 4-hydroxybenzoate (4HB) for the ubiquinone pathway. The sequence is that of Chorismate pyruvate-lyase from Escherichia coli O17:K52:H18 (strain UMN026 / ExPEC).